We begin with the raw amino-acid sequence, 424 residues long: D-inositol 3-phosphate glycosyltransferase (424 aa).

Residue His16 coordinates 1D-myo-inositol 3-phosphate. Residues 22–23 (QP) and Gly30 contribute to the UDP-N-acetyl-alpha-D-glucosamine site. 1D-myo-inositol 3-phosphate-binding positions include 27–32 (DAGGMN), Lys85, Tyr118, Thr142, and Arg162. The UDP-N-acetyl-alpha-D-glucosamine site is built by Arg240 and Lys245. Mg(2+)-binding residues include Met313, Arg314, and Ala316. Positions 326 and 334 each coordinate UDP-N-acetyl-alpha-D-glucosamine. Thr340 is a Mg(2+) binding site.

It belongs to the glycosyltransferase group 1 family. MshA subfamily. In terms of assembly, homodimer.

It carries out the reaction 1D-myo-inositol 3-phosphate + UDP-N-acetyl-alpha-D-glucosamine = 1D-myo-inositol 2-acetamido-2-deoxy-alpha-D-glucopyranoside 3-phosphate + UDP + H(+). Catalyzes the transfer of a N-acetyl-glucosamine moiety to 1D-myo-inositol 3-phosphate to produce 1D-myo-inositol 2-acetamido-2-deoxy-glucopyranoside 3-phosphate in the mycothiol biosynthesis pathway. This chain is D-inositol 3-phosphate glycosyltransferase, found in Jonesia denitrificans (strain ATCC 14870 / DSM 20603 / BCRC 15368 / CIP 55.134 / JCM 11481 / NBRC 15587 / NCTC 10816 / Prevot 55134) (Listeria denitrificans).